A 1456-amino-acid polypeptide reads, in one-letter code: Putative 1-phosphatidylinositol-3-phosphate 5-kinase FAB1D (1456 aa).

The segment covering 1–19 (MTPSNSLSSSERSLSGECS) has biased composition (low complexity). Disordered regions lie at residues 1 to 110 (MTPS…EVDG), 533 to 592 (PVSV…NDIE), 925 to 944 (ENDN…TPLV), 967 to 987 (VPED…TSPI), 1003 to 1022 (NGQE…DDEV), and 1137 to 1159 (NNQD…TNRL). Over residues 43-57 (ELTKEVKVDRLERKS) the composition is skewed to basic and acidic residues. The span at 86–110 (REDDSDDVPVWEPPEPENPEDEVDG) shows a compositional bias: acidic residues. The span at 533-544 (PVSVDTDVSTTS) shows a compositional bias: low complexity. Polar residues predominate over residues 973 to 987 (SQTLCSSSPDTTSPI). A PIPK domain is found at 1115–1443 (NNEESKKPLS…RFRKFMKTHF (329 aa)). Positions 1150-1159 (RFSSESTNRL) are enriched in polar residues.

Component of the PI(3,5)P2 regulatory complex at least composed of ATG18, SAC/FIG4, FAB1 and VAC14. Mg(2+) serves as cofactor. Requires Mn(2+) as cofactor.

The enzyme catalyses a 1,2-diacyl-sn-glycero-3-phospho-(1D-myo-inositol-3-phosphate) + ATP = a 1,2-diacyl-sn-glycero-3-phospho-(1D-myo-inositol-3,5-bisphosphate) + ADP + H(+). Its function is as follows. The PI(3,5)P2 regulatory complex regulates both the synthesis and turnover of phosphatidylinositol 3,5-bisphosphate (PtdIns(3,5)P2). Catalyzes the phosphorylation of phosphatidylinositol 3-phosphate on the fifth hydroxyl of the myo-inositol ring, to form phosphatidylinositol 3,5-bisphosphate. The sequence is that of Putative 1-phosphatidylinositol-3-phosphate 5-kinase FAB1D (FAB1D) from Arabidopsis thaliana (Mouse-ear cress).